The chain runs to 436 residues: 3-ketoacyl-CoA thiolase (436 aa).

Residue C99 is the Acyl-thioester intermediate of the active site. Active-site proton acceptor residues include H392 and C422.

The protein belongs to the thiolase-like superfamily. Thiolase family. Heterotetramer of two alpha chains (FadJ) and two beta chains (FadI).

Its subcellular location is the cytoplasm. The enzyme catalyses an acyl-CoA + acetyl-CoA = a 3-oxoacyl-CoA + CoA. Its pathway is lipid metabolism; fatty acid beta-oxidation. Its function is as follows. Catalyzes the final step of fatty acid oxidation in which acetyl-CoA is released and the CoA ester of a fatty acid two carbons shorter is formed. The sequence is that of 3-ketoacyl-CoA thiolase from Escherichia coli (strain K12 / MC4100 / BW2952).